The chain runs to 248 residues: Ferric nitrobindin-like protein (248 aa).

Composition is skewed to polar residues over residues 1-25 (MSSD…TNSG) and 32-43 (QAVNLAAEQSKS). The tract at residues 1–49 (MSSDKANNQSPDQGANTPAESTNSGPKLDGNQAVNLAAEQSKSTADKNL) is disordered. Positions 82–88 (GVWRGQG) match the GXWXGXG motif. The interval 118-147 (SRTWKINPPAEEGAEADGDEASAESAGEPE) is disordered. The span at 129–139 (EGAEADGDEAS) shows a compositional bias: acidic residues.

It belongs to the nitrobindin family.

The sequence is that of Ferric nitrobindin-like protein from Corynebacterium urealyticum (strain ATCC 43042 / DSM 7109).